The primary structure comprises 360 residues: UDP-N-acetylglucosamine--N-acetylmuramyl-(pentapeptide) pyrophosphoryl-undecaprenol N-acetylglucosamine transferase (360 aa).

UDP-N-acetyl-alpha-D-glucosamine contacts are provided by residues 14 to 16, asparagine 131, arginine 167, serine 195, isoleucine 249, and glutamine 294; that span reads TGG.

It belongs to the glycosyltransferase 28 family. MurG subfamily.

The protein localises to the cell inner membrane. It carries out the reaction di-trans,octa-cis-undecaprenyl diphospho-N-acetyl-alpha-D-muramoyl-L-alanyl-D-glutamyl-meso-2,6-diaminopimeloyl-D-alanyl-D-alanine + UDP-N-acetyl-alpha-D-glucosamine = di-trans,octa-cis-undecaprenyl diphospho-[N-acetyl-alpha-D-glucosaminyl-(1-&gt;4)]-N-acetyl-alpha-D-muramoyl-L-alanyl-D-glutamyl-meso-2,6-diaminopimeloyl-D-alanyl-D-alanine + UDP + H(+). It participates in cell wall biogenesis; peptidoglycan biosynthesis. Its function is as follows. Cell wall formation. Catalyzes the transfer of a GlcNAc subunit on undecaprenyl-pyrophosphoryl-MurNAc-pentapeptide (lipid intermediate I) to form undecaprenyl-pyrophosphoryl-MurNAc-(pentapeptide)GlcNAc (lipid intermediate II). This Polaromonas naphthalenivorans (strain CJ2) protein is UDP-N-acetylglucosamine--N-acetylmuramyl-(pentapeptide) pyrophosphoryl-undecaprenol N-acetylglucosamine transferase.